Here is a 505-residue protein sequence, read N- to C-terminus: Probable cytosol aminopeptidase (505 aa).

Residues K269 and D274 each coordinate Mn(2+). Residue K281 is part of the active site. Residues D292, D351, and E353 each coordinate Mn(2+). R355 is a catalytic residue.

The protein belongs to the peptidase M17 family. Mn(2+) serves as cofactor.

The protein resides in the cytoplasm. The enzyme catalyses Release of an N-terminal amino acid, Xaa-|-Yaa-, in which Xaa is preferably Leu, but may be other amino acids including Pro although not Arg or Lys, and Yaa may be Pro. Amino acid amides and methyl esters are also readily hydrolyzed, but rates on arylamides are exceedingly low.. The catalysed reaction is Release of an N-terminal amino acid, preferentially leucine, but not glutamic or aspartic acids.. Its function is as follows. Presumably involved in the processing and regular turnover of intracellular proteins. Catalyzes the removal of unsubstituted N-terminal amino acids from various peptides. This is Probable cytosol aminopeptidase from Rhodococcus erythropolis (strain PR4 / NBRC 100887).